We begin with the raw amino-acid sequence, 248 residues long: MLNINNKIAKGGYVYSKNIRLAKSKIDKQKCYDVREACSIIKEISFAKFNETVDIAIKLGVNPSHSSQVVRGVAAMPSGTGKTVKVAVICQEEKLDEFKTTGADIVGSLDIIEAIKSGNIDYDVYITTPAMMVAVSQVARILGPKGLMPNPKLGTVTNDVAAVVKKVKSGQVEFKVDKAGNIHAGIGKISFSIDEIEANINALVSAIIKSKPSEAKGTYLNGIYLSTTMGPSVRLEISNFTESGNERR.

The protein belongs to the universal ribosomal protein uL1 family. In terms of assembly, part of the 50S ribosomal subunit.

Functionally, binds directly to 23S rRNA. The L1 stalk is quite mobile in the ribosome, and is involved in E site tRNA release. Its function is as follows. Protein L1 is also a translational repressor protein, it controls the translation of the L11 operon by binding to its mRNA. In Orientia tsutsugamushi (strain Boryong) (Rickettsia tsutsugamushi), this protein is Large ribosomal subunit protein uL1.